The following is a 181-amino-acid chain: Large ribosomal subunit protein uL16 (181 aa).

This sequence belongs to the universal ribosomal protein uL16 family.

The chain is Large ribosomal subunit protein uL16 from Pyrococcus abyssi (strain GE5 / Orsay).